Reading from the N-terminus, the 884-residue chain is Cadherin-1 (884 aa).

The N-terminal stretch at 1–23 (MGARCRSFSALLLLLQVSSWLCQ) is a signal peptide. Positions 24 to 156 (ELEPESCSPG…VYPGLRRQKR (133 aa)) are excised as a propeptide. A disordered region spans residues 119-139 (KSMGHHHHRHHHRDPASESNP). A compositionally biased stretch (basic residues) spans 121–131 (MGHHHHRHHHR). Cadherin domains follow at residues 157-264 (DWVI…RPEF), 265-377 (TQEV…APVF), 378-488 (NPST…APIF), 489-595 (MPAE…DNAP), and 596-699 (IPEP…NCMK). The Extracellular portion of the chain corresponds to 157-709 (DWVIPPISCP…AGIVAAGLQV (553 aa)). Residue Asp-259 coordinates Ca(2+). O-linked (Man...) serine glycosylation is found at Ser-282 and Ser-287. Residue Asp-290 coordinates Ca(2+). Thr-360, Thr-472, Thr-474, and Thr-511 each carry an O-linked (Man...) threonine glycan. Asn-560 carries an N-linked (GlcNAc...) asparagine glycan. O-linked (Man...) threonine glycans are attached at residues Thr-578, Thr-580, and Thr-582. Asn-639 carries an N-linked (GlcNAc...) asparagine glycan. Residues 710–733 (PAILGILGGILALLILILLLLLFL) form a helical membrane-spanning segment. Residues 734–884 (RRRTVVKEPL…ADMYGGGEDD (151 aa)) lie on the Cytoplasmic side of the membrane. A disordered region spans residues 749-808 (DTRDNVYYYDEEGGGEEDQDFDLSQLHRGLDARPEVTRNDVAPTLMSVPQYRPRPANPDE). Phosphotyrosine; by SRC is present on residues Tyr-755, Tyr-756, and Tyr-757. Positions 757–769 (YDEEGGGEEDQDF) are enriched in acidic residues. A required for binding CTNND1 and PSEN1 region spans residues 760 to 771 (EGGGEEDQDFDL). Ser-772 is modified (phosphoserine). The span at 776-786 (RGLDARPEVTR) shows a compositional bias: basic and acidic residues. A phosphoserine mark is found at Ser-795, Ser-840, Ser-842, and Ser-848. A required for binding alpha, beta and gamma catenins region spans residues 813–884 (IDENLKAADS…ADMYGGGEDD (72 aa)).

As to quaternary structure, homodimer; disulfide-linked. Component of an E-cadherin/ catenin adhesion complex composed of at least E-cadherin/CDH1, beta-catenin/CTNNB1 or gamma-catenin/JUP, and potentially alpha-catenin/CTNNA1; the complex is located to adherens junctions. Found in a complex composed of CDH1, RAP1A and PKP3; PKP3 acts as a scaffold protein within the complex, the complex is required for CDH1 localization to mature desmosome cell junctions. Interacts with the TRPV4 and CTNNB1 complex. Interacts with CTNND1. The stable association of CTNNA1 is controversial as CTNNA1 was shown not to bind to F-actin when assembled in the complex. Alternatively, the CTNNA1-containing complex may be linked to F-actin by other proteins such as LIMA1. Interaction with PSEN1, cleaves CDH1 resulting in the disassociation of cadherin-based adherens junctions (CAJs). Interacts with AJAP1 and DLGAP5. Interacts with TBC1D2. Interacts with LIMA1. Interacts with CAV1. Interacts with PIP5K1C. Interacts with RAB8B. Interacts with DDR1; this stabilizes CDH1 at the cell surface and inhibits its internalization. Interacts with RAPGEF2. Interacts with KLRG1. Forms a ternary complex composed of ADAM10, CADH1 and EPHA4; within the complex, CADH1 is cleaved by ADAM10 which disrupts adherens junctions. Interacts with SPEF1. Interacts with CTNNB1 and PKP2. Interacts with AMOTL2; the interaction may facilitate binding of radial actin fibers to cell junction complexes. Interacts with DSG3; the interaction is required for CDH1 localization to developing adherens junctions. During apoptosis or with calcium influx, cleaved by a membrane-bound metalloproteinase (ADAM10), PS1/gamma-secretase and caspase-3. Processing by the metalloproteinase, induced by calcium influx, causes disruption of cell-cell adhesion and the subsequent release of beta-catenin into the cytoplasm. The residual membrane-tethered cleavage product is rapidly degraded via an intracellular proteolytic pathway. Cleavage by caspase-3 releases the cytoplasmic tail resulting in disintegration of the actin microfilament system. The gamma-secretase-mediated cleavage promotes disassembly of adherens junctions. During development of the cochlear organ of Corti, cleavage by ADAM10 at adherens junctions promotes pillar cell separation. In terms of processing, O-glycosylated. O-manosylated by TMTC1, TMTC2, TMTC3 or TMTC4. Ser-287 and Thr-511 are O-manosylated by TMTC2 or TMTC4 but not TMTC1 or TMTC3. Post-translationally, N-glycosylation at Asn-639 is essential for expression, folding and trafficking. Addition of bisecting N-acetylglucosamine by MGAT3 modulates its cell membrane location. Ubiquitinated by a SCF complex containing SKP2, which requires prior phosphorylation by CK1/CSNK1A1. Ubiquitinated by CBLL1/HAKAI, requires prior phosphorylation at Tyr-756. In terms of tissue distribution, expressed in inner and outer pillar cells of the organ of Corti (at protein level). Expressed in granuloma macrophages (at protein level). Expressed in the epidermal keratinocytes of the skin from birth (at protein level). Expressed in non-neural epithelial tissues.

It is found in the cell junction. It localises to the adherens junction. The protein localises to the cell membrane. The protein resides in the endosome. Its subcellular location is the golgi apparatus. It is found in the trans-Golgi network. It localises to the cytoplasm. The protein localises to the desmosome. Its function is as follows. Cadherins are calcium-dependent cell adhesion proteins. They preferentially interact with themselves in a homophilic manner in connecting cells; cadherins may thus contribute to the sorting of heterogeneous cell types. CDH1 is involved in mechanisms regulating cell-cell adhesions, mobility and proliferation of epithelial cells. Promotes organization of radial actin fiber structure and cellular response to contractile forces, via its interaction with AMOTL2 which facilitates anchoring of radial actin fibers to CDH1 junction complexes at the cell membrane. Plays a role in the early stages of desmosome cell-cell junction formation via facilitating the recruitment of DSG2 and DSP to desmosome plaques. Has a potent invasive suppressor role. It is a ligand for integrin alpha-E/beta-7. In terms of biological role, E-Cad/CTF2 promotes non-amyloidogenic degradation of Abeta precursors. Has a strong inhibitory effect on APP C99 and C83 production. Functionally, (Microbial infection) Does not function as a receptor for L.monocytogenes internalin A (InlA); mutating a single surface-exposed residue confers receptor activity to this protein and promotes uptake of the bacteria. The sequence is that of Cadherin-1 (Cdh1) from Mus musculus (Mouse).